The primary structure comprises 122 residues: Flagellar protein FliT (122 aa).

The tract at residues 1-50 (MTSTVEFINRWQRIALLSQSLLELAQRGEWELLLQQEVSYLQSIETVMEK) is required for homodimerization. Positions 60-98 (IQDMVAGYIKQTLDNEQRLKGLLQQRLDELSGLIGQSTR) are fliD binding.

It belongs to the FliT family. Homodimer. Interacts with FliD and FlhC.

It localises to the cytoplasm. The protein resides in the cytosol. Its function is as follows. Dual-function protein that regulates the transcription of class 2 flagellar operons and that also acts as an export chaperone for the filament-capping protein FliD. As a transcriptional regulator, acts as an anti-FlhDC factor; it directly binds FlhC, thus inhibiting the binding of the FlhC/FlhD complex to class 2 promoters, resulting in decreased expression of class 2 flagellar operons. As a chaperone, effects FliD transition to the membrane by preventing its premature polymerization, and by directing it to the export apparatus. This Salmonella arizonae (strain ATCC BAA-731 / CDC346-86 / RSK2980) protein is Flagellar protein FliT.